The primary structure comprises 30 residues: ALWKSLLKGAGQLVGGVVQHFMGSQGQPES.

As to expression, expressed by the skin glands.

It localises to the secreted. In terms of biological role, has antimicrobial activity. The sequence is that of Dermaseptin-J10 from Phasmahyla jandaia (Jandaia leaf frog).